Here is a 306-residue protein sequence, read N- to C-terminus: Shugoshin (306 aa).

Positions 28–75 (NFKSTNESLIKKNLQLKQQLSQCTKALEKLRNENIALREQNQELIDAT) form a coiled coil. 2 disordered regions span residues 122–196 (PEPS…GRRS) and 223–306 (IAPS…DTFF). The span at 133 to 161 (PKMECNLEKLDESPVRNFPRSDYEEENKS) shows a compositional bias: basic and acidic residues. Over residues 167 to 181 (NGPSSSSSMTQNLEN) the composition is skewed to polar residues. Residues 230 to 241 (GGPPKKAPPRKA) are compositionally biased toward pro residues.

The protein belongs to the shugoshin family.

It localises to the nucleus. The protein resides in the chromosome. Its subcellular location is the centromere. Its function is as follows. Plays a central role in chromosome cohesion during cell division by preventing premature dissociation of cohesin complex from centromeres after prophase, when most of cohesin complex dissociates from chromosomes arms. The sequence is that of Shugoshin (sgo-1) from Caenorhabditis briggsae.